We begin with the raw amino-acid sequence, 118 residues long: V-type proton ATPase subunit G 3 (118 aa).

A disordered region spans residues methionine 1 to lysine 34. Residues serine 5–glutamate 54 are a coiled coil. The span at alanine 14–lysine 26 shows a compositional bias: basic and acidic residues.

Belongs to the V-ATPase G subunit family. V-ATPase is a heteromultimeric enzyme made up of two complexes: the ATP-hydrolytic V1 complex and the proton translocation V0 complex. The V1 complex consists of three catalytic AB heterodimers that form a heterohexamer, three peripheral stalks each consisting of EG heterodimers, one central rotor including subunits D and F, and the regulatory subunits C and H. The proton translocation complex V0 consists of the proton transport subunit a, a ring of proteolipid subunits c9c'', rotary subunit d, subunits e and f, and the accessory subunits ATP6AP1/Ac45 and ATP6AP2/PRR. In terms of tissue distribution, kidney.

In terms of biological role, subunit of the V1 complex of vacuolar(H+)-ATPase (V-ATPase), a multisubunit enzyme composed of a peripheral complex (V1) that hydrolyzes ATP and a membrane integral complex (V0) that translocates protons. V-ATPase is responsible for acidifying and maintaining the pH of intracellular compartments and in some cell types, is targeted to the plasma membrane, where it is responsible for acidifying the extracellular environment. The protein is V-type proton ATPase subunit G 3 (ATP6V1G3) of Homo sapiens (Human).